The sequence spans 147 residues: Hemoglobin subunit beta-1 (147 aa).

The 145-residue stretch at 3–147 (KWSKTELTII…VVSALGKQYH (145 aa)) folds into the Globin domain. Heme b-binding residues include histidine 64 and histidine 93.

It belongs to the globin family. Hb1 is a heterotetramer of two alpha chains and two beta-1 chains. As to expression, red blood cells.

Its function is as follows. Involved in oxygen transport from gills to the various peripheral tissues. The protein is Hemoglobin subunit beta-1 (hbb1) of Cygnodraco mawsoni (Antarctic dragonfish).